The primary structure comprises 75 residues: UPF0352 protein YejL (75 aa).

The protein belongs to the UPF0352 family.

The polypeptide is UPF0352 protein YejL (Shigella dysenteriae serotype 1 (strain Sd197)).